A 98-amino-acid chain; its full sequence is UPF0235 protein Asuc_1977 (98 aa).

The protein belongs to the UPF0235 family.

In Actinobacillus succinogenes (strain ATCC 55618 / DSM 22257 / CCUG 43843 / 130Z), this protein is UPF0235 protein Asuc_1977.